A 274-amino-acid chain; its full sequence is Carboxy-S-adenosyl-L-methionine synthase (274 aa).

S-adenosyl-L-methionine-binding positions include Y59, 93–95 (GCS), 149–150 (DI), N164, and R231.

The protein belongs to the class I-like SAM-binding methyltransferase superfamily. Cx-SAM synthase family. Homodimer.

The enzyme catalyses prephenate + S-adenosyl-L-methionine = carboxy-S-adenosyl-L-methionine + 3-phenylpyruvate + H2O. Catalyzes the conversion of S-adenosyl-L-methionine (SAM) to carboxy-S-adenosyl-L-methionine (Cx-SAM). This chain is Carboxy-S-adenosyl-L-methionine synthase, found in Psychrobacter sp. (strain PRwf-1).